Here is a 132-residue protein sequence, read N- to C-terminus: Replication enhancer protein (132 aa).

This sequence belongs to the geminiviridae replication enhancer protein family. As to quaternary structure, homooligomer. Interacts with the replication-associated protein (REP). Interacts with host proliferating cell nuclear antigen (PCNA). Interacts with host retinoblastoma-related protein 1 (RBR1), and may thereby deregulate the host cell cycle. Oligomerization and interaction with PCNA are necessary for optimal replication enhancement.

Its function is as follows. Increases viral DNA accumulation. Enhances infectivity and symptom expression. This chain is Replication enhancer protein, found in Cabbage leaf curl virus (isolate Jamaica) (CaLCuV).